Here is a 253-residue protein sequence, read N- to C-terminus: 5'-nucleotidase SurE (253 aa).

Residues Asp-8, Asp-9, Ser-39, and Asn-92 each coordinate a divalent metal cation.

This sequence belongs to the SurE nucleotidase family. A divalent metal cation is required as a cofactor.

The protein localises to the cytoplasm. The catalysed reaction is a ribonucleoside 5'-phosphate + H2O = a ribonucleoside + phosphate. In terms of biological role, nucleotidase that shows phosphatase activity on nucleoside 5'-monophosphates. The protein is 5'-nucleotidase SurE of Burkholderia pseudomallei (strain 1710b).